The following is a 286-amino-acid chain: Protein HEXIM2 (286 aa).

The segment covering 1 to 11 has biased composition (polar residues); sequence MMATPNQTACN. The disordered stretch occupies residues 1 to 195; the sequence is MMATPNQTAC…GEFQRKDFSE (195 aa). Ser29 carries the post-translational modification Phosphoserine. Residue Thr32 is modified to Phosphothreonine. Ser39 is modified (phosphoserine). Phosphothreonine is present on Thr46. Phosphoserine is present on residues Ser51, Ser53, Ser71, Ser76, and Ser81. A compositionally biased stretch (polar residues) spans 68-78; it reads NSRSPRTQSPG. A compositionally biased stretch (basic residues) spans 87–103; the sequence is ARKKHRRRPSKRKRHWR. Residues 113-132 show a composition bias toward basic and acidic residues; sequence KQQRDERQSQRASRVREEMF. Residues 140 to 143 are interaction with P-TEFb; sequence PYNT. The span at 178–195 shows a compositional bias: basic and acidic residues; sequence SDGRGRAHGEFQRKDFSE. The stretch at 207–277 forms a coiled coil; it reads GRSKQELVRD…QENQMWNREG (71 aa). The interval 226–286 is interaction with CCNT1, HEXIM1 and HEXIM2; it reads QAEEETRRLQ…GCRCDEEPGT (61 aa).

This sequence belongs to the HEXIM family. Homooligomer and heterooligomer with HEXIM1; probably dimeric. Core component of the 7SK RNP complex, at least composed of 7SK RNA, LARP7, MEPCE, HEXIM1 (or HEXIM2) and P-TEFb (composed of CDK9 and CCNT1/cyclin-T1). Interacts with CCNT2. Ubiquitously expressed with higher expression in testis. HEXIM1 and HEXIM2 are differentially expressed.

The protein localises to the nucleus. Functionally, transcriptional regulator which functions as a general RNA polymerase II transcription inhibitor. Core component of the 7SK RNP complex: in cooperation with 7SK snRNA sequesters P-TEFb in a large inactive 7SK snRNP complex preventing RNA polymerase II phosphorylation and subsequent transcriptional elongation. In Homo sapiens (Human), this protein is Protein HEXIM2 (HEXIM2).